We begin with the raw amino-acid sequence, 128 residues long: Large ribosomal subunit protein bL17 (128 aa).

It belongs to the bacterial ribosomal protein bL17 family. Part of the 50S ribosomal subunit. Contacts protein L32.

The protein is Large ribosomal subunit protein bL17 of Pseudomonas fluorescens (strain Pf0-1).